Here is a 134-residue protein sequence, read N- to C-terminus: RuBisCO chaperone RbcX (134 aa).

A disordered region spans residues 97–134 (SNGNHRRSLLERLTQVDSSSTDQTEPNPGESDTSEDSE). Residues 111 to 122 (QVDSSSTDQTEP) show a composition bias toward polar residues.

Belongs to the RbcX family. Homodimer (RbcX2). Interacts with the exposed C-terminal peptide of RbcL ('Glu-459-Asp-468'); binds 2 RbcL peptides per RbcX2, stapling them into an RbcL2 dimer. A slightly longer peptide binds with a higher affinity, but no long-term stable interaction with RbcL is detected. Contacts a second RbcL monomer via its peripheral polar surface.

The protein resides in the carboxysome. It localises to the cytoplasm. An RbcL-specific chaperone. Required for assembly of the RbcL8 core, acting downstream of the major chaperonin (GroEL-GroES). Acts on newly folded RbcL, has a transient dynamic interaction with RbcL and is eventually displaced by RbcS. The central cleft of the RbcX homodimer (RbcX2) binds the C-terminus of an RbcL monomer, stabilizing the C-terminus and probably preventing its reassociation with chaperonin GroEL-ES. At the same time the peripheral region of RbcX2 binds a second RbcL monomer, bridging the RbcL homodimers in the correct orientation. The RbcX2(2)-bound RbcL dimers then assemble into the RbcL8 core (RbcL8-(RbcX2)8). RbcS binding triggers the release of RbcX2. Required for optimal reconstitution of RuBisCO into its RbcL8S8 holoenzyme form upon expression of rbcL-rbcS subunits in E.coli, and probably also in situ. A frameshift mutation that replaces half the protein reduces accumulation of both RbcL and RbcS subunits and halves activity of RuBisCO in situ and in E.coli. The sequence is that of RuBisCO chaperone RbcX from Picosynechococcus sp. (strain ATCC 27264 / PCC 7002 / PR-6) (Agmenellum quadruplicatum).